The following is a 203-amino-acid chain: CASP-like protein 2U2 (203 aa).

Residues 1 to 21 (MGGFVDDGAAGLAPSHGSSRA) are disordered. Residues 1 to 27 (MGGFVDDGAAGLAPSHGSSRAGRGLEG) lie on the Cytoplasmic side of the membrane. Residues 28–48 (AGVFLRFVASLLSIAGLMLLV) traverse the membrane as a helical segment. Over 49 to 73 (KDNQTVQQMVATEAVTLETKYSDIS) the chain is Extracellular. Asparagine 51 carries an N-linked (GlcNAc...) asparagine glycan. The chain crosses the membrane as a helical span at residues 74–94 (AFVFLLYTNGLVAVYCFFLAL). Residues 95–108 (ASVFSLIASARSGK) are Cytoplasmic-facing. The chain crosses the membrane as a helical span at residues 109–129 (LAGWVTFVLDQGLAYVLLAAA). The Extracellular portion of the chain corresponds to 130 to 163 (AASTEVLYLAENGDLKTSWAEICSQFGHFCHMAR). Residues 164–184 (ASIVVSFLSMLAMAVLSVMSA) traverse the membrane as a helical segment. At 185–203 (QQLFSKYRRPMTAKTAQDI) the chain is on the cytoplasmic side.

It belongs to the Casparian strip membrane proteins (CASP) family. In terms of assembly, homodimer and heterodimers.

Its subcellular location is the cell membrane. In Osmunda lancea (Fern), this protein is CASP-like protein 2U2.